A 142-amino-acid polypeptide reads, in one-letter code: FAD synthase (142 aa).

ATP-binding positions include 9 to 10 (TF), 14 to 17 (HPGH), Asp92, and Tyr119.

It belongs to the archaeal FAD synthase family. In terms of assembly, homodimer. A divalent metal cation serves as cofactor.

The catalysed reaction is FMN + ATP + H(+) = FAD + diphosphate. It functions in the pathway cofactor biosynthesis; FAD biosynthesis; FAD from FMN: step 1/1. Catalyzes the transfer of the AMP portion of ATP to flavin mononucleotide (FMN) to produce flavin adenine dinucleotide (FAD) coenzyme. The chain is FAD synthase from Halorhabdus utahensis (strain DSM 12940 / JCM 11049 / AX-2).